The following is a 1094-amino-acid chain: Isoleucine--tRNA ligase (1094 aa).

The short motif at 53–63 is the 'HIGH' region element; the sequence is PFANGLPHYGH. Residues 624-628 carry the 'KMSKS' region motif; the sequence is KLSKR. Lysine 627 serves as a coordination point for ATP.

Belongs to the class-I aminoacyl-tRNA synthetase family. IleS type 2 subfamily. Monomer. Zn(2+) serves as cofactor.

The protein localises to the cytoplasm. It carries out the reaction tRNA(Ile) + L-isoleucine + ATP = L-isoleucyl-tRNA(Ile) + AMP + diphosphate. Its function is as follows. Catalyzes the attachment of isoleucine to tRNA(Ile). As IleRS can inadvertently accommodate and process structurally similar amino acids such as valine, to avoid such errors it has two additional distinct tRNA(Ile)-dependent editing activities. One activity is designated as 'pretransfer' editing and involves the hydrolysis of activated Val-AMP. The other activity is designated 'posttransfer' editing and involves deacylation of mischarged Val-tRNA(Ile). The chain is Isoleucine--tRNA ligase from Rickettsia felis (strain ATCC VR-1525 / URRWXCal2) (Rickettsia azadi).